The chain runs to 208 residues: Small ribosomal subunit protein eS8 (208 aa).

Residues 1 to 27 are disordered; sequence MGISRDNWHKRRRTGGKRKPVHKKRKY. Positions 8-26 are enriched in basic residues; sequence WHKRRRTGGKRKPVHKKRK.

The protein belongs to the eukaryotic ribosomal protein eS8 family. Component of the small ribosomal subunit. Identified in a IGF2BP1-dependent mRNP granule complex containing untranslated mRNAs. Part of the small subunit (SSU) processome, composed of more than 70 proteins and the RNA chaperone small nucleolar RNA (snoRNA) U3.

The protein resides in the cytoplasm. Its subcellular location is the membrane. The protein localises to the nucleus. It localises to the nucleolus. Functionally, component of the small ribosomal subunit. The ribosome is a large ribonucleoprotein complex responsible for the synthesis of proteins in the cell. Part of the small subunit (SSU) processome, first precursor of the small eukaryotic ribosomal subunit. During the assembly of the SSU processome in the nucleolus, many ribosome biogenesis factors, an RNA chaperone and ribosomal proteins associate with the nascent pre-rRNA and work in concert to generate RNA folding, modifications, rearrangements and cleavage as well as targeted degradation of pre-ribosomal RNA by the RNA exosome. In Danio rerio (Zebrafish), this protein is Small ribosomal subunit protein eS8 (rps8).